A 427-amino-acid chain; its full sequence is GTPase ERA-like, chloroplastic (427 aa).

The transit peptide at 1 to 39 directs the protein to the chloroplast; that stretch reads MAVSPHISPTLSRYKFFSTSVVENPNFSPYRIYSRRRVT. Positions 128 to 298 constitute an Era-type G domain; it reads RSGYVAVVGM…KEWILSKLPF (171 aa). Residues 136-143 form a G1 region; it reads GMPNVGKS. 136–143 contacts GTP; the sequence is GMPNVGKS. Residues 162–166 are G2; the sequence is QTTRH. The G3 stretch occupies residues 183–186; that stretch reads DTPG. GTP is bound by residues 183–187 and 248–251; these read DTPGV and NKKD. The G4 stretch occupies residues 248-251; that stretch reads NKKD. The segment at 277 to 279 is G5; it reads VSA. One can recognise a KH type-2 domain in the interval 329–406; it reads YRNEVPYACQ…FLEVEVKVKE (78 aa).

This sequence belongs to the TRAFAC class TrmE-Era-EngA-EngB-Septin-like GTPase superfamily. Era GTPase family.

It localises to the plastid. Its subcellular location is the chloroplast stroma. The protein localises to the chloroplast nucleoid. In terms of biological role, nuclear genome-encoded probable GTPase involved in ribosome biogenesis in chloroplasts. Plays a role in 16S rRNA maturation in plastids and may contribute to the assembly of the small (30S) ribosomal subunit. This chain is GTPase ERA-like, chloroplastic, found in Arabidopsis thaliana (Mouse-ear cress).